The sequence spans 167 residues: U-scoloptoxin(08)-Er5a (167 aa).

An N-terminal signal peptide occupies residues 1 to 22 (MKTNCEFPLLCLLIVLVANVEG). The propeptide occupies 23–94 (EVEDTGLKMV…KRLWRNWERR (72 aa)). RLWRNWE repeat units lie at residues 34–40 (RLWRNWE), 61–67 (RLWRNWE), and 86–92 (RLWRNWE). Position 95 is a pyrrolidone carboxylic acid (Q95). An RLWRNWE 4; approximate repeat occupies 107-113 (ELWRNWE). A propeptide spanning residues 112–118 (WEDLKRR) is cleaved from the precursor. At Q119 the chain carries Pyrrolidone carboxylic acid. One copy of the RLWRNWE 5 repeat lies at 134-140 (RLWRNWE). Positions 139-167 (WEDNHATLRKRSADSLSRQKRLGKERGKE) are excised as a propeptide. The disordered stretch occupies residues 147–167 (RKRSADSLSRQKRLGKERGKE).

Belongs to the scoloptoxin-08 family. As to expression, expressed by the venom gland.

Its subcellular location is the secreted. This Ethmostigmus rubripes (Giant centipede) protein is U-scoloptoxin(08)-Er5a.